Consider the following 1179-residue polypeptide: Probable manganese-transporting ATPase PDR2 (1179 aa).

Residues 1–20 (MSSFRVGGKVVEKVDLCRKK) lie on the Cytoplasmic side of the membrane. A helical transmembrane segment spans residues 21-42 (QLVWRLDVWPFAILYTVWLTTI). The Lumenal segment spans residues 43-50 (VPSIDFSD). The helical transmembrane segment at 51 to 71 (ACIALGGLSAFHILVLLFTTW) threads the bilayer. Over 72-192 (SVDFKCFVQF…FDYPQPTFQK (121 aa)) the chain is Cytoplasmic. Residues 193–215 (LMKENCMEPFFVFQVFCVGLWCL) traverse the membrane as a helical segment. At 216–218 (DEF) the chain is on the lumenal side. Residues 219–238 (WYYSVFTLFMLFMFESTMAK) traverse the membrane as a helical segment. The Cytoplasmic portion of the chain corresponds to 239–402 (SRLKTLTDLR…ERVTANSWES (164 aa)). A helical transmembrane segment spans residues 403–422 (GLFILFLVVFAVIAAGYVLV). Over 423 to 435 (KGLEDPTRSKYKL) the chain is Lumenal. The helical transmembrane segment at 436 to 453 (LLGCSLIITSVIPPELPM) threads the bilayer. Residues 454 to 947 (ELSIAVNTSL…RQGRSTLVTT (494 aa)) are Cytoplasmic-facing. Catalysis depends on D491, which acts as the 4-aspartylphosphate intermediate. Mg(2+) contacts are provided by D812 and D816. Positions 833-880 (KLPLSPSDSSKDDKSKSKKSKLPLEPASKTITQNGEGSSKGKIPPQNR) are disordered. Residues 948 to 967 (LQMFKILGLNCLATAYVLSV) form a helical membrane-spanning segment. The Lumenal segment spans residues 968-979 (MYLDGVKLGDVQ). The chain crosses the membrane as a helical span at residues 980–997 (ATISGVLTAAFFLFISHA). Residues 998 to 1013 (RPLQTLSAERPHPSVF) are Cytoplasmic-facing. A helical transmembrane segment spans residues 1014–1034 (SVYLFLSLIGQFAVHLTFLVY). Residues 1035–1059 (SVKEAEKHMPEECIEPDASFHPNLV) are Lumenal-facing. A helical membrane pass occupies residues 1060–1079 (NTVSYMVSMMLQVATFAVNY). Residues 1080–1092 (MGHPFNQSIRENK) are Cytoplasmic-facing. A helical membrane pass occupies residues 1093–1110 (PFFYALIAGAGFFTVIAS). Over 1111-1128 (DLFRDLNDSLKLVPLPQG) the chain is Lumenal. The helical transmembrane segment at 1129–1148 (LRDKLLIWASLMFIICYSWE) threads the bilayer. The Cytoplasmic segment spans residues 1149-1179 (RLLRWAFPGKISSWKHKQRAVTANLEKKKKV).

The protein belongs to the cation transport ATPase (P-type) (TC 3.A.3) family. Type V subfamily. In terms of tissue distribution, highly expressed in root meristem. Expressed in pavement cells of trichomes, stipules, stamens and pollen grains.

Its subcellular location is the endoplasmic reticulum membrane. The enzyme catalyses ATP + H2O = ADP + phosphate + H(+). Mediates manganese transport into the endoplasmic reticulum. The ATPase activity is required for cellular manganese homeostasis. Plays an important role in pollen and root development through its impact on protein secretion and transport processes. Functions together with LPR1 and LPR2 in a common pathway that adjusts root meristem activity to phosphate availability. Under phosphate limitation, restricts SHR movement in root meristem and is required for maintaining SCR expression in the root meristem stem-cell niche as well as for proximal meristem activity. Can complement the yeast spf1 mutant. The sequence is that of Probable manganese-transporting ATPase PDR2 (PDR2) from Arabidopsis thaliana (Mouse-ear cress).